The chain runs to 508 residues: Photosystem II CP47 reaction center protein (508 aa).

The next 6 membrane-spanning stretches (helical) occupy residues 21-36, 101-115, 140-156, 203-218, 237-252, and 457-472; these read SVHI…WAGS, IVFS…IWHW, GIHL…FGAF, IAAG…FHLS, VLSS…AFVV, and SFAL…HGAR.

This sequence belongs to the PsbB/PsbC family. PsbB subfamily. In terms of assembly, PSII is composed of 1 copy each of membrane proteins PsbA, PsbB, PsbC, PsbD, PsbE, PsbF, PsbH, PsbI, PsbJ, PsbK, PsbL, PsbM, PsbT, PsbX, PsbY, PsbZ, Psb30/Ycf12, at least 3 peripheral proteins of the oxygen-evolving complex and a large number of cofactors. It forms dimeric complexes. Binds multiple chlorophylls. PSII binds additional chlorophylls, carotenoids and specific lipids. is required as a cofactor.

It localises to the plastid. Its subcellular location is the chloroplast thylakoid membrane. Its function is as follows. One of the components of the core complex of photosystem II (PSII). It binds chlorophyll and helps catalyze the primary light-induced photochemical processes of PSII. PSII is a light-driven water:plastoquinone oxidoreductase, using light energy to abstract electrons from H(2)O, generating O(2) and a proton gradient subsequently used for ATP formation. The sequence is that of Photosystem II CP47 reaction center protein from Eucalyptus globulus subsp. globulus (Tasmanian blue gum).